Consider the following 138-residue polypeptide: Putative pre-16S rRNA nuclease (138 aa).

The protein belongs to the YqgF nuclease family.

Its subcellular location is the cytoplasm. Functionally, could be a nuclease involved in processing of the 5'-end of pre-16S rRNA. The sequence is that of Putative pre-16S rRNA nuclease from Bacillus pumilus (strain SAFR-032).